A 1151-amino-acid polypeptide reads, in one-letter code: Zinc finger protein ZFPM2 (1151 aa).

Basic residues predominate over residues 1 to 13; it reads MSRRKQSKPRQIK. The interval 1-102 is disordered; the sequence is MSRRKQSKPR…ETDDWDGPGE (102 aa). 2 stretches are compositionally biased toward acidic residues: residues 18–33 and 70–82; these read DAIEDEEEECPSEETD and EGIQETAESDGDT. The CCHC FOG-type 1 zinc-finger motif lies at 244-277; it reads IVNKDIFPCKSCGIWYRSERNLQAHLMYYCSGRQ. Residues Cys252, Cys255, His268, and Cys273 each coordinate Zn(2+). Residues 296–320 form a C2H2-type 1 zinc finger; the sequence is SLCPFPQCTKSFSNARALEMHLNSH. A Glycyl lysine isopeptide (Lys-Gly) (interchain with G-Cter in SUMO1) cross-link involves residue Lys324. 2 consecutive C2H2-type zinc fingers follow at residues 335–357 and 363–385; these read LKCTVCSYTADSVINFHQHLFSH and FRCNHCHFGFQTQRELLQHQELH. Positions 389 to 487 are disordered; it reads GKLPRESDME…RLASSPVQPN (99 aa). Polar residues-rich tracts occupy residues 401–410 and 419–431; these read PSATEDSLQP and ELPQSQKAMQTKD. Lys444 participates in a covalent cross-link: Glycyl lysine isopeptide (Lys-Gly) (interchain with G-Cter in SUMO2). The segment covering 447–485 has biased composition (polar residues); that stretch reads LFLTNQRPEIQPTTNKQSFSYTKIKSEPSSPRLASSPVQ. Lys471 is covalently cross-linked (Glycyl lysine isopeptide (Lys-Gly) (interchain with G-Cter in SUMO1)). At Ser532 the chain carries Phosphoserine. A CCHC FOG-type 2 zinc finger spans residues 542-575; sequence PLMPKGATCFECNITFNNLDNYLVHKKHYCSSRW. Cys550, Cys553, His566, and Cys571 together coordinate Zn(2+). Ser581 is modified (phosphoserine). Positions 636–683 are disordered; the sequence is GPNGKGHDKDFSTQTKKLSTSSNNDDKINGKPVDVKNPSVPLVDGESD. Residues 647 to 658 are compositionally biased toward polar residues; that stretch reads STQTKKLSTSSN. The segment at 681–714 adopts a CCHC FOG-type 3 zinc-finger fold; it reads ESDPNKTTCEACNITFSRHETYMVHKQYYCATRH. Residues Cys689, Cys692, His705, and Cys710 each contribute to the Zn(2+) site. Residues 736 to 740 carry the Nuclear localization signal motif; it reads RKRRK. The segment at 829-835 is interaction with CTBP2; sequence PIDLSKK. The CCHC FOG-type 4 zinc finger occupies 848-881; sequence KRLLDYHECTVCKISFNKVENYLAHKQNFCPVTA. Residues Cys856, Cys859, His872, and Cys877 each contribute to the Zn(2+) site. Phosphoserine is present on Ser904. Glycyl lysine isopeptide (Lys-Gly) (interchain with G-Cter in SUMO1) cross-links involve residues Lys915 and Lys955. A Phosphoserine modification is found at Ser1014. The interval 1051–1095 is disordered; it reads DERPAANPQQENISQNPQHEDDHKSPSWISENPLAANENVSPGIP. A compositionally biased stretch (polar residues) spans 1057-1067; it reads NPQQENISQNP. The CCHC FOG-type 5 zinc finger occupies 1113-1146; sequence QAPTSGKYCRLCDIQFNNLSNFITHKKFYCSSHA. Zn(2+) is bound by residues Cys1121, Cys1124, His1137, and Cys1142.

It belongs to the FOG (Friend of GATA) family. Interacts with the N-terminal zinc-finger of GATA4, GATA5 and probably GATA6. Interacts with retinoid nuclear receptor RXRA when ligand bound. Interacts with corepressor CTBP2; this interaction is however not essential for corepressor activity. Able to bind GATA1 in vitro. Interacts with NR2F2 and NR2F6. Interacts with ATOH8; mediates indirect interaction with GATA4. In terms of processing, sumoylation reduces transcriptional repression activity. As to expression, widely expressed at low level.

It is found in the nucleus. In terms of biological role, transcription regulator that plays a central role in heart morphogenesis and development of coronary vessels from epicardium, by regulating genes that are essential during cardiogenesis. Essential cofactor that acts via the formation of a heterodimer with transcription factors of the GATA family GATA4, GATA5 and GATA6. Such heterodimer can both activate or repress transcriptional activity, depending on the cell and promoter context. Also required in gonadal differentiation, possibly be regulating expression of SRY. Probably acts a corepressor of NR2F2. The protein is Zinc finger protein ZFPM2 (ZFPM2) of Homo sapiens (Human).